Here is a 464-residue protein sequence, read N- to C-terminus: Sensor protein IrlS (464 aa).

The Periplasmic segment spans residues 1–13 (MIRRLLPRTLRAR). Residues 14-34 (LTALIILSTAATLALSGVALY) form a helical membrane-spanning segment. Residues 35-166 (SALHNRLVGM…DHALLRAYAY (132 aa)) lie on the Cytoplasmic side of the membrane. The helical transmembrane segment at 167-187 (TVVVIEVLAVVLTAALAYGIA) threads the bilayer. The HAMP domain maps to 188 to 241 (MLGLSPLRRLVARAEQMSSSRLAQPLPELDTSGELKEMEHAFNAMLKRLDESFV). At 188–464 (MLGLSPLRRL…FWLKFPAHAA (277 aa)) the chain is on the periplasmic side. One can recognise a Histidine kinase domain in the interval 249 to 463 (NLAHDMRTPL…TFWLKFPAHA (215 aa)). A Phosphohistidine; by autocatalysis modification is found at His252.

It is found in the cell inner membrane. The catalysed reaction is ATP + protein L-histidine = ADP + protein N-phospho-L-histidine.. Member of the two-component regulatory system IrlR/IrlS. May be involved in invasion of eukaryotic cells and heavy-metal resistance. Probably activates IrlR by phosphorylation. The chain is Sensor protein IrlS (irlS) from Burkholderia pseudomallei (strain K96243).